We begin with the raw amino-acid sequence, 122 residues long: Large ribosomal subunit protein bL12 (122 aa).

It belongs to the bacterial ribosomal protein bL12 family. Homodimer. Part of the ribosomal stalk of the 50S ribosomal subunit. Forms a multimeric L10(L12)X complex, where L10 forms an elongated spine to which 2 to 4 L12 dimers bind in a sequential fashion. Binds GTP-bound translation factors.

Forms part of the ribosomal stalk which helps the ribosome interact with GTP-bound translation factors. Is thus essential for accurate translation. The chain is Large ribosomal subunit protein bL12 from Azotobacter vinelandii (strain DJ / ATCC BAA-1303).